The sequence spans 81 residues: Photosystem I iron-sulfur center (81 aa).

4Fe-4S ferredoxin-type domains follow at residues 2–31 (AHSV…MVPW) and 39–68 (IASA…VRVY). [4Fe-4S] cluster contacts are provided by Cys11, Cys14, Cys17, Cys21, Cys48, Cys51, Cys54, and Cys58.

In terms of assembly, the eukaryotic PSI reaction center is composed of at least 11 subunits. [4Fe-4S] cluster is required as a cofactor.

It localises to the plastid. Its subcellular location is the chloroplast thylakoid membrane. The enzyme catalyses reduced [plastocyanin] + hnu + oxidized [2Fe-2S]-[ferredoxin] = oxidized [plastocyanin] + reduced [2Fe-2S]-[ferredoxin]. Functionally, apoprotein for the two 4Fe-4S centers FA and FB of photosystem I (PSI); essential for photochemical activity. FB is the terminal electron acceptor of PSI, donating electrons to ferredoxin. The C-terminus interacts with PsaA/B/D and helps assemble the protein into the PSI complex. Required for binding of PsaD and PsaE to PSI. PSI is a plastocyanin/cytochrome c6-ferredoxin oxidoreductase, converting photonic excitation into a charge separation, which transfers an electron from the donor P700 chlorophyll pair to the spectroscopically characterized acceptors A0, A1, FX, FA and FB in turn. The protein is Photosystem I iron-sulfur center of Pyropia yezoensis (Susabi-nori).